A 770-amino-acid polypeptide reads, in one-letter code: Proton-coupled zinc antiporter SLC30A5 (770 aa).

Topologically, residues M1 to Y29 are cytoplasmic. The helical transmembrane segment at I30–L50 threads the bilayer. Residues L51–A53 lie on the Lumenal side of the membrane. The helical transmembrane segment at V54 to F74 threads the bilayer. At Q75 to H95 the chain is on the cytoplasmic side. The chain crosses the membrane as a helical span at residues A96–L116. A topological domain (lumenal) is located at residue R117. A helical membrane pass occupies residues T118–T138. The Cytoplasmic portion of the chain corresponds to S139–G149. Residues A150–A170 form a helical membrane-spanning segment. Residues K171 to T190 are Lumenal-facing. A helical transmembrane segment spans residues V191–L211. Residues C212–Q235 lie on the Cytoplasmic side of the membrane. The helical transmembrane segment at A236–T256 threads the bilayer. At T257–W264 the chain is on the lumenal side. A helical membrane pass occupies residues S265–V285. Residues E286 to R300 lie on the Cytoplasmic side of the membrane. Residues Y301 to I321 traverse the membrane as a helical segment. The Lumenal segment spans residues T322–H339. A helical transmembrane segment spans residues V340 to S360. Residues S361–Q415 are Cytoplasmic-facing. A helical membrane pass occupies residues I416–W436. The Lumenal portion of the chain corresponds to T437–D445. Residues G446 to T466 traverse the membrane as a helical segment. Residues H448 and D452 each contribute to the Zn(2+) site. Residues R467 to R480 are Cytoplasmic-facing. The helical transmembrane segment at V481–F501 threads the bilayer. Residues M502 to N517 lie on the Lumenal side of the membrane. The chain crosses the membrane as a helical span at residues M518–S538. The tract at residues H539–H579 is his-rich loop; required for zinc transport. At H539–V597 the chain is on the cytoplasmic side. The tract at residues G548–S586 is disordered. The segment covering S558 to H570 has biased composition (basic residues). Residues F598–I618 traverse the membrane as a helical segment. Positions 600 and 604 each coordinate Zn(2+). Over Q619–G622 the chain is Lumenal. Residues W623–I643 form a helical membrane-spanning segment. Topologically, residues P644–M770 are cytoplasmic.

It belongs to the cation diffusion facilitator (CDF) transporter (TC 2.A.4) family. SLC30A subfamily. Heterodimer with SLC30A6/ZNT6; form a functional zinc ion transmembrane transporter.

The protein resides in the golgi apparatus. It localises to the golgi stack membrane. It is found in the cytoplasmic vesicle. Its subcellular location is the COPII-coated vesicle membrane. The protein localises to the secretory vesicle membrane. The protein resides in the trans-Golgi network membrane. It catalyses the reaction Zn(2+)(in) + 2 H(+)(out) = Zn(2+)(out) + 2 H(+)(in). Together with SLC30A6 forms a functional proton-coupled zinc ion antiporter mediating zinc entry into the lumen of organelles along the secretory pathway. By contributing to zinc ion homeostasis within the early secretory pathway, regulates the activation and folding of enzymes like alkaline phosphatases and enzymes involved in phosphatidylinositol glycan anchor biosynthesis. In Gallus gallus (Chicken), this protein is Proton-coupled zinc antiporter SLC30A5.